The primary structure comprises 448 residues: Proteases secretion protein PrtE (448 aa).

The Cytoplasmic portion of the chain corresponds to 1–30 (MTGMDITTQDELNEAAMRDRASRDEERALR). Residues 31–50 (LGWWLVLAGFGGFLLWALLA) form a helical membrane-spanning segment. The Periplasmic portion of the chain corresponds to 51-448 (PLDKGVAVQG…DRMHLALTEE (398 aa)).

This sequence belongs to the membrane fusion protein (MFP) (TC 8.A.1) family.

The protein resides in the cell inner membrane. Involved in the secretion of proteases A, B, C and G. This is Proteases secretion protein PrtE (prtE) from Dickeya chrysanthemi (Pectobacterium chrysanthemi).